The following is a 643-amino-acid chain: E3 ubiquitin-protein ligase Praja-1 (643 aa).

The disordered stretch occupies residues 1–363; sequence MGQESSKPVW…SDDYYKYCDE (363 aa). 3 stretches are compositionally biased toward basic and acidic residues: residues 95–105, 145–158, and 173–183; these read DYSRYPPREYR, KFKD…EKGA, and RDVREERDKLD. A compositionally biased stretch (low complexity) spans 200–209; that stretch reads QSSVASQSSS. Basic and acidic residues predominate over residues 213–227; it reads LATKGDSSERERREQ. At S265 the chain carries Phosphoserine. A Phosphothreonine modification is found at T277. Basic and acidic residues-rich tracts occupy residues 289-310 and 320-362; these read RWRD…RGRG and KYPE…KYCD. S365 and S367 each carry phosphoserine. The tract at residues 380–454 is disordered; sequence RSREQTLSSS…REPSLQEEQA (75 aa). The segment covering 410–439 has biased composition (low complexity); that stretch reads SASTGTSPGPGASASAGAGAGASAGSNGSN. The RING-type zinc finger occupies 595-636; that stretch reads CPICCSEYVKGEVATELPCHHYFHKPCVSIWLQKSGTCPVCR.

As to quaternary structure, binds ubiquitin-conjugating enzymes (E2s). In vitro, interacts with the ubiquitin-conjugating enzyme, UBE2D2. Post-translationally, substrate for E2-dependent ubiquitination. In terms of tissue distribution, expressed in various regions of the brain including the cerebellum, cerebral cortex, medulla, occipital pole, frontal lobe, temporal lobe and putamen. Highest levels in the cerebral cortex.

It catalyses the reaction S-ubiquitinyl-[E2 ubiquitin-conjugating enzyme]-L-cysteine + [acceptor protein]-L-lysine = [E2 ubiquitin-conjugating enzyme]-L-cysteine + N(6)-ubiquitinyl-[acceptor protein]-L-lysine.. Has E2-dependent E3 ubiquitin-protein ligase activity. Ubiquitinates MAGED1 antigen leading to its subsequent degradation by proteasome. May be involved in protein sorting. The polypeptide is E3 ubiquitin-protein ligase Praja-1 (PJA1) (Homo sapiens (Human)).